A 762-amino-acid polypeptide reads, in one-letter code: ABC-type oligopeptide transporter ABCB9 (762 aa).

Transmembrane regions (helical) follow at residues 7 to 27 (VVVTLAFVSTDVGVTTAIYAF), 47 to 67 (VLDLWAACLYRSCLLLGATIG), 84 to 104 (LVITLVCLFVGIYAMAKLLLF), 116 to 136 (FWALFVWTYISLAASFLLWGL), 181 to 201 (VAFLVAASFFLIVAALGETFL), 221 to 241 (FTTAVVVVCLLAIGSSLAAGI), 315 to 335 (VFMFSLSWQLSLVTFMGFPII), and 412 to 432 (SGLTLLVVQVSILYYGGHLVI). The 284-residue stretch at 184–467 (LVAASFFLIV…VGSVYSGLMQ (284 aa)) folds into the ABC transmembrane type-1 domain. The ABC transporter domain occupies 500 to 736 (VDFENVTFTY…GGLYAKLVQR (237 aa)). 535 to 542 (GPSGSGKS) provides a ligand contact to ATP.

Belongs to the ABC transporter superfamily. ABCB family. MHC peptide exporter (TC 3.A.1.209) subfamily. As to quaternary structure, homodimer. Interacts (via TMD0 region) with LAMP1; this interaction strongly stabilizes ABCB9 and protects ABCB9 against lysosomal degradation. Interacts (via TMD0 region) with LAMP2 (isoform LAMP-2B). Interacts (via TMD0) with YIF1B; this interaction allows (but is not essential) the ER-to-Golgi trafficking and strongly depends on a salt bridge within TMD0. Highly expressed in testis, particularly in the Sertoli cells of the seminiferous tubules, and at moderate levels in brain and spinal cord.

Its subcellular location is the lysosome membrane. It carries out the reaction a [oligopeptide](in) + ATP + H2O = a [oligopeptide](out) + ADP + phosphate + H(+). In terms of biological role, ATP-dependent low-affinity peptide transporter which translocates a broad spectrum of peptides from the cytosol to the lysosomal lumen for degradation. Displays a broad peptide length specificity from 6-mer up to at least 59-mer peptides with an optimum of 23-mers. Binds and transports smaller and larger peptides with the same affinity. Favors positively charged, aromatic or hydrophobic residues in the N- and C-terminal positions whereas negatively charged residues as well as asparagine and methionine are not favored. This is ABC-type oligopeptide transporter ABCB9 from Mus musculus (Mouse).